The primary structure comprises 332 residues: Solute carrier family 25 member 16 (332 aa).

Solcar repeat units follow at residues 34–120, 128–216, and 238–328; these read FYWL…YKTL, SGHV…LKSV, and LKTH…MKQF. 6 helical membrane passes run 37–57, 88–108, 134–154, 191–211, 244–264, and 299–319; these read LRSFLAGGIAGCCAKTTVAPL, GFLGLYKGNGAMMIRIFPYGA, LMAGSMAGMTAVICTYPLDMV, GLMPTILGMAPYAGVSFFTFG, LLCGGVAGAIAQTISYPFDVT, and GLYRGLSLNYIRCIPSQAVAF.

This sequence belongs to the mitochondrial carrier (TC 2.A.29) family.

The protein resides in the mitochondrion inner membrane. Functionally, may be involved in the transport of coenzyme A in the mitochondrial matrix. Very little is known about the physiological function of this carrier. This Homo sapiens (Human) protein is Solute carrier family 25 member 16.